The primary structure comprises 491 residues: uncharacterized protein (491 aa).

Trp-99 lines the substrate pocket. Asn-137 is a binding site for Ca(2+). Residue His-138 coordinates substrate. Ca(2+)-binding residues include Glu-177 and Asp-190. Substrate is bound at residue Arg-219. Ca(2+)-binding residues include Asp-221, His-225, and Glu-245. Asp-221 serves as the catalytic Nucleophile. 224-225 (KH) contacts substrate. The active-site Proton donor is the Glu-245. The substrate site is built by Gly-249, His-312, and Arg-360.

The protein belongs to the glycosyl hydrolase 13 family. It depends on Ca(2+) as a cofactor.

The protein resides in the cytoplasm. It localises to the nucleus. This is an uncharacterized protein from Schizosaccharomyces pombe (strain 972 / ATCC 24843) (Fission yeast).